The primary structure comprises 193 residues: Ribosome maturation factor RimM (193 aa).

A PRC barrel domain is found at aspartate 97–valine 172. A disordered region spans residues proline 168–aspartate 193. Residues glycine 173–aspartate 193 show a composition bias toward basic and acidic residues.

Belongs to the RimM family. In terms of assembly, binds ribosomal protein uS19.

It localises to the cytoplasm. Functionally, an accessory protein needed during the final step in the assembly of 30S ribosomal subunit, possibly for assembly of the head region. Essential for efficient processing of 16S rRNA. May be needed both before and after RbfA during the maturation of 16S rRNA. It has affinity for free ribosomal 30S subunits but not for 70S ribosomes. The chain is Ribosome maturation factor RimM from Caulobacter vibrioides (strain ATCC 19089 / CIP 103742 / CB 15) (Caulobacter crescentus).